Consider the following 539-residue polypeptide: O-phosphoserine--tRNA(Cys) ligase (539 aa).

Substrate contacts are provided by residues 188–190, 233–235, 275–276, and N327; these read HMT, SAS, and YY.

It belongs to the class-II aminoacyl-tRNA synthetase family. O-phosphoseryl-tRNA(Cys) synthetase subfamily. In terms of assembly, homotetramer. Interacts with SepCysS.

The enzyme catalyses tRNA(Cys) + O-phospho-L-serine + ATP = O-phospho-L-seryl-tRNA(Cys) + AMP + diphosphate. Its function is as follows. Catalyzes the attachment of O-phosphoserine (Sep) to tRNA(Cys). This Methanosarcina mazei (strain ATCC BAA-159 / DSM 3647 / Goe1 / Go1 / JCM 11833 / OCM 88) (Methanosarcina frisia) protein is O-phosphoserine--tRNA(Cys) ligase.